Here is a 793-residue protein sequence, read N- to C-terminus: Alanine--tRNA ligase, mitochondrial (793 aa).

ATP contacts are provided by residues Arg88, Trp187, and 224–226; that span reads IWN. L-alanine contacts are provided by Asn226 and Asp249. Gly253 contributes to the ATP binding site. Zn(2+) contacts are provided by His594, His598, Cys706, and His710.

The protein belongs to the class-II aminoacyl-tRNA synthetase family. As to quaternary structure, monomer. The cofactor is Zn(2+).

Its subcellular location is the mitochondrion. It catalyses the reaction tRNA(Ala) + L-alanine + ATP = L-alanyl-tRNA(Ala) + AMP + diphosphate. In terms of biological role, catalyzes the attachment of alanine to tRNA(Ala) in a two-step reaction: alanine is first activated by ATP to form Ala-AMP and then transferred to the acceptor end of tRNA(Ala). Also edits incorrectly charged tRNA(Ala) via its editing domain. The protein is Alanine--tRNA ligase, mitochondrial of Caenorhabditis elegans.